We begin with the raw amino-acid sequence, 164 residues long: Probable ubiquitin-conjugating enzyme E2 7 (164 aa).

One can recognise a UBC core domain in the interval 3–163; it reads QSSLLLKKQL…VAQCVRRSQE (161 aa). Cys-88 serves as the catalytic Glycyl thioester intermediate.

The protein belongs to the ubiquitin-conjugating enzyme family.

The enzyme catalyses S-ubiquitinyl-[E1 ubiquitin-activating enzyme]-L-cysteine + [E2 ubiquitin-conjugating enzyme]-L-cysteine = [E1 ubiquitin-activating enzyme]-L-cysteine + S-ubiquitinyl-[E2 ubiquitin-conjugating enzyme]-L-cysteine.. Its pathway is protein modification; protein ubiquitination. Functionally, catalyzes the covalent attachment of ubiquitin to other proteins. In Caenorhabditis elegans, this protein is Probable ubiquitin-conjugating enzyme E2 7 (ubc-7).